The chain runs to 498 residues: NADP-dependent glyceraldehyde-3-phosphate dehydrogenase (498 aa).

Residues Arg118 and 171–172 (NY) contribute to the substrate site. Positions 194, 197, and 232 each coordinate NADP(+). 247-251 (GGDTG) is a binding site for NAD(+). Catalysis depends on Glu266, which acts as the Proton acceptor. A substrate-binding site is contributed by 299–301 (RCT). Residue Cys300 is the Nucleophile of the active site. Glu393 lines the NADP(+) pocket. Residue Arg453 coordinates substrate.

The protein belongs to the aldehyde dehydrogenase family.

Its subcellular location is the cytoplasm. The catalysed reaction is D-glyceraldehyde 3-phosphate + NADP(+) + H2O = (2R)-3-phosphoglycerate + NADPH + 2 H(+). Functionally, important as a means of generating NADPH for biosynthetic reactions. The protein is NADP-dependent glyceraldehyde-3-phosphate dehydrogenase (GPN1) of Zea mays (Maize).